The primary structure comprises 554 residues: Nonribosomal peptide synthetase ALT12 (554 aa).

Residues 1 to 76 (MASLEHMKRI…TLWEAMNDTQ (76 aa)) enclose the Carrier domain. Serine 35 is subject to O-(pantetheine 4'-phosphoryl)serine. The condensation stretch occupies residues 124-434 (VQDNVLCVAP…QRIQNEITST (311 aa)).

This sequence belongs to the NRP synthetase family.

It functions in the pathway mycotoxin biosynthesis. Functionally, nonribosomal peptide synthetase; part of the gene cluster that mediates the biosynthesis of the host-selective toxins (HSTs) AAL-toxins, sphinganine-analog mycotoxins responsible for Alternaria stem canker on tomato by the tomato pathotype. The biosynthesis starts with the polyketide synthase ALT1-catalyzed C-16 carbon chain assembly from one starter acetyl-CoA unit with malonyl-CoA extender units. ALT1 also selectively transfers methyl groups at the first and the third cycle of chain elongation for AAL toxin. The C-16 polyketide chain is released from the enzyme by a nucleophilic attack of a carbanion, which is derived from R-carbon of glycin by decarboxylation, on the carbonyl carbon of polyketide acyl chain. This step is probably catalyzed by a pyridoxal 5'-phosphate-dependent aminoacyl transferase ALT4. The respective functions of the other enzymes encoded by the cluster have still to be elucidated. The sphingosine N-acyltransferase-like protein ALT7 seems not to act as a resistance/self-tolerance factor against the toxin in the toxin biosynthetic gene cluster, contrary to what is expected. The protein is Nonribosomal peptide synthetase ALT12 of Alternaria alternata (Alternaria rot fungus).